The chain runs to 674 residues: Zinc finger protein 750 (674 aa).

The CCHC-type zinc finger occupies 25-51; the sequence is YKCFQCPFTCNEKSHLFNHMKYGLCKN. Residues cysteine 27, cysteine 30, histidine 43, and cysteine 49 each coordinate Zn(2+). 3 disordered regions span residues 105–125, 370–466, and 594–674; these read EAKE…KTTV, LAKN…QSHS, and TSSP…PRVS. Polar residues-rich tracts occupy residues 401 to 411 and 444 to 466; these read SPTNFTQSSQG and DSQT…QSHS.

It is found in the nucleus. Transcription factor involved in epidermis differentiation. This is Zinc finger protein 750 (znf750) from Xenopus laevis (African clawed frog).